Consider the following 165-residue polypeptide: UPF0262 protein blr1257 (165 aa).

Belongs to the UPF0262 family.

The protein is UPF0262 protein blr1257 of Bradyrhizobium diazoefficiens (strain JCM 10833 / BCRC 13528 / IAM 13628 / NBRC 14792 / USDA 110).